The chain runs to 350 residues: uncharacterized protein (350 aa).

Basic and acidic residues predominate over residues 197-212 (KNDNSEDNRSEDDLKS). Positions 197–217 (KNDNSEDNRSEDDLKSSQDPV) are disordered.

It localises to the plastid. It is found in the chloroplast. This is an uncharacterized protein from Euglena gracilis.